A 380-amino-acid chain; its full sequence is Lipid-A-disaccharide synthase (380 aa).

This sequence belongs to the LpxB family.

The catalysed reaction is a lipid X + a UDP-2-N,3-O-bis[(3R)-3-hydroxyacyl]-alpha-D-glucosamine = a lipid A disaccharide + UDP + H(+). Its pathway is bacterial outer membrane biogenesis; LPS lipid A biosynthesis. In terms of biological role, condensation of UDP-2,3-diacylglucosamine and 2,3-diacylglucosamine-1-phosphate to form lipid A disaccharide, a precursor of lipid A, a phosphorylated glycolipid that anchors the lipopolysaccharide to the outer membrane of the cell. This Pseudomonas syringae pv. tomato (strain ATCC BAA-871 / DC3000) protein is Lipid-A-disaccharide synthase.